A 276-amino-acid polypeptide reads, in one-letter code: Anthranilate synthase beta subunit 1, chloroplastic (276 aa).

The N-terminal 50 residues, 1-50 (MAASTLYKSCLLQPKSGSTTRRLNPSLVNPLTNPTRVSVLGKSRRDVFAK), are a transit peptide targeting the chloroplast. The region spanning 74–273 (PIIVIDNYDS…IKIVEKKESE (200 aa)) is the Glutamine amidotransferase type-1 domain. Cys152 (nucleophile) is an active-site residue. Catalysis depends on residues His247 and Glu249.

As to quaternary structure, heterotetramer consisting of two non-identical subunits: a beta subunit and a large alpha subunit. Expressed in the central cylinder of mature primary root zones, including pericycle and early lateral root primordia, and vasculature of cotyledons.

The protein resides in the plastid. It is found in the chloroplast. It catalyses the reaction chorismate + L-glutamine = anthranilate + pyruvate + L-glutamate + H(+). The protein operates within amino-acid biosynthesis; L-tryptophan biosynthesis; L-tryptophan from chorismate: step 1/5. Its function is as follows. Part of a heterotetrameric complex that catalyzes the two-step biosynthesis of anthranilate, an intermediate in the biosynthesis of L-tryptophan. In the first step, the glutamine-binding beta subunit of anthranilate synthase (AS) provides the glutamine amidotransferase activity which generates ammonia as a substrate that, along with chorismate, is used in the second step, catalyzed by the large alpha subunit of AS to produce anthranilate. Plays an important regulatory role in auxin production via the tryptophan-dependent biosynthetic pathway. The polypeptide is Anthranilate synthase beta subunit 1, chloroplastic (ASB1) (Arabidopsis thaliana (Mouse-ear cress)).